The sequence spans 519 residues: Putative cytochrome P450 CYP13A1 (519 aa).

Cysteine 465 contacts heme.

The protein belongs to the cytochrome P450 family. Requires heme as cofactor.

In terms of biological role, cytochromes P450 are a group of heme-thiolate monooxygenases. They oxidize a variety of structurally unrelated compounds, including steroids, fatty acids, and xenobiotics. This Caenorhabditis elegans protein is Putative cytochrome P450 CYP13A1 (cyp-13A1).